The primary structure comprises 1891 residues: Protein TIC 214 (1891 aa).

6 helical membrane passes run 18-38 (IINSVVVVGLYYGFLTTFSIG), 64-84 (FITGQLMMFISIYYAPLHLAL), 87-107 (PHTITVLALPYLLFHFFWNNH), 124-144 (LSIQCVFLNNLIFQLFNHFIL), 172-192 (VGWLIGHILFMKWLGLVLVWI), and 221-241 (IFSILLFITCVYYLGRIPSPI). 3 disordered regions span residues 248–300 (EASK…EGWD), 788–807 (EEQTKREEKKEKDKKEDNKR), and 1580–1607 (KNRSQEAKEPPSQRERGSDIENKGNLSP). Over residues 256–268 (VESEEERDVEIET) the composition is skewed to acidic residues. The span at 1582-1601 (RSQEAKEPPSQRERGSDIEN) shows a compositional bias: basic and acidic residues.

It belongs to the TIC214 family. In terms of assembly, part of the Tic complex.

It localises to the plastid. It is found in the chloroplast inner membrane. Functionally, involved in protein precursor import into chloroplasts. May be part of an intermediate translocation complex acting as a protein-conducting channel at the inner envelope. The protein is Protein TIC 214 of Solanum lycopersicum (Tomato).